The chain runs to 178 residues: Large ribosomal subunit protein uL10 (178 aa).

It belongs to the universal ribosomal protein uL10 family. Part of the ribosomal stalk of the 50S ribosomal subunit. The N-terminus interacts with L11 and the large rRNA to form the base of the stalk. The C-terminus forms an elongated spine to which L12 dimers bind in a sequential fashion forming a multimeric L10(L12)X complex.

Functionally, forms part of the ribosomal stalk, playing a central role in the interaction of the ribosome with GTP-bound translation factors. This Petrotoga mobilis (strain DSM 10674 / SJ95) protein is Large ribosomal subunit protein uL10.